We begin with the raw amino-acid sequence, 290 residues long: Diaminopimelate epimerase (290 aa).

Asn-17, Gln-49, and Asn-69 together coordinate substrate. Catalysis depends on Cys-78, which acts as the Proton donor. Substrate-binding positions include 79–80, Asn-165, Asn-198, and 216–217; these read GN and ER. Residue Cys-225 is the Proton acceptor of the active site. Position 226–227 (226–227) interacts with substrate; that stretch reads GS.

Belongs to the diaminopimelate epimerase family. In terms of assembly, homodimer.

Its subcellular location is the cytoplasm. The catalysed reaction is (2S,6S)-2,6-diaminopimelate = meso-2,6-diaminopimelate. It participates in amino-acid biosynthesis; L-lysine biosynthesis via DAP pathway; DL-2,6-diaminopimelate from LL-2,6-diaminopimelate: step 1/1. In terms of biological role, catalyzes the stereoinversion of LL-2,6-diaminopimelate (L,L-DAP) to meso-diaminopimelate (meso-DAP), a precursor of L-lysine and an essential component of the bacterial peptidoglycan. In Methylocella silvestris (strain DSM 15510 / CIP 108128 / LMG 27833 / NCIMB 13906 / BL2), this protein is Diaminopimelate epimerase.